Here is a 426-residue protein sequence, read N- to C-terminus: Enolase (426 aa).

Gln-163 contacts (2R)-2-phosphoglycerate. The active-site Proton donor is Glu-205. Asp-242, Glu-283, and Asp-310 together coordinate Mg(2+). Lys-335, Arg-364, Ser-365, and Lys-386 together coordinate (2R)-2-phosphoglycerate. Residue Lys-335 is the Proton acceptor of the active site.

Belongs to the enolase family. Mg(2+) is required as a cofactor.

It is found in the cytoplasm. The protein resides in the secreted. It localises to the cell surface. The enzyme catalyses (2R)-2-phosphoglycerate = phosphoenolpyruvate + H2O. It participates in carbohydrate degradation; glycolysis; pyruvate from D-glyceraldehyde 3-phosphate: step 4/5. Its function is as follows. Catalyzes the reversible conversion of 2-phosphoglycerate (2-PG) into phosphoenolpyruvate (PEP). It is essential for the degradation of carbohydrates via glycolysis. This chain is Enolase, found in Clavibacter michiganensis subsp. michiganensis (strain NCPPB 382).